Consider the following 880-residue polypeptide: Translation initiation factor IF-2 (880 aa).

7 stretches are compositionally biased toward basic and acidic residues: residues 34–43, 59–69, 82–94, 110–131, 167–181, 230–240, and 248–261; these read HMSSLDDKQV, TEKDSKNSSRK, RRRD…DNRH, NRRE…DLLN, KKVE…EKLE, QKEETKPTRKK, and EVPD…EHSD. Residues 34-297 form a disordered region; sequence HMSSLDDKQV…KERPLPETLV (264 aa). A compositionally biased stretch (basic residues) spans 262–275; sequence KARRRRNKKNKRIN. The span at 276 to 292 shows a compositional bias: basic and acidic residues; that stretch reads QSKEVKKQPTQRKERPL. The tr-type G domain occupies 381–550; sequence KRPPVVTIMG…LLQADVMELK (170 aa). The segment at 390–397 is G1; that stretch reads GHVDHGKT. Residue 390–397 coordinates GTP; the sequence is GHVDHGKT. A G2 region spans residues 415-419; that stretch reads GITQR. The interval 436-439 is G3; the sequence is DTPG. Residues 436–440 and 490–493 each bind GTP; these read DTPGH and NKID. The interval 490-493 is G4; sequence NKID. Residues 526-528 are G5; it reads SAK.

The protein belongs to the TRAFAC class translation factor GTPase superfamily. Classic translation factor GTPase family. IF-2 subfamily.

It localises to the cytoplasm. One of the essential components for the initiation of protein synthesis. Protects formylmethionyl-tRNA from spontaneous hydrolysis and promotes its binding to the 30S ribosomal subunits. Also involved in the hydrolysis of GTP during the formation of the 70S ribosomal complex. This is Translation initiation factor IF-2 from Lactobacillus johnsonii (strain CNCM I-12250 / La1 / NCC 533).